The chain runs to 265 residues: Indole-3-glycerol phosphate synthase (265 aa).

It belongs to the TrpC family.

The catalysed reaction is 1-(2-carboxyphenylamino)-1-deoxy-D-ribulose 5-phosphate + H(+) = (1S,2R)-1-C-(indol-3-yl)glycerol 3-phosphate + CO2 + H2O. It functions in the pathway amino-acid biosynthesis; L-tryptophan biosynthesis; L-tryptophan from chorismate: step 4/5. The protein is Indole-3-glycerol phosphate synthase of Xanthomonas euvesicatoria pv. vesicatoria (strain 85-10) (Xanthomonas campestris pv. vesicatoria).